We begin with the raw amino-acid sequence, 834 residues long: Glycerol-3-phosphate acyltransferase (834 aa).

The HXXXXD motif signature appears at 304–309; it reads CHRSHM. Residues 800 to 834 form a disordered region; sequence SVSMPAETSNQPEAPETPETPETPETPEPEGKTES.

It belongs to the GPAT/DAPAT family.

The protein localises to the cell inner membrane. It catalyses the reaction sn-glycerol 3-phosphate + an acyl-CoA = a 1-acyl-sn-glycero-3-phosphate + CoA. It participates in phospholipid metabolism; CDP-diacylglycerol biosynthesis; CDP-diacylglycerol from sn-glycerol 3-phosphate: step 1/3. In Yersinia pseudotuberculosis serotype I (strain IP32953), this protein is Glycerol-3-phosphate acyltransferase.